A 401-amino-acid chain; its full sequence is Probable aspartate/prephenate aminotransferase (401 aa).

Positions 39, 125, and 175 each coordinate L-aspartate. An N6-(pyridoxal phosphate)lysine modification is found at lysine 239. Residue arginine 375 coordinates L-aspartate.

This sequence belongs to the class-I pyridoxal-phosphate-dependent aminotransferase family. As to quaternary structure, homodimer. Pyridoxal 5'-phosphate is required as a cofactor.

The protein localises to the cytoplasm. It catalyses the reaction L-aspartate + 2-oxoglutarate = oxaloacetate + L-glutamate. The catalysed reaction is L-arogenate + 2-oxoglutarate = prephenate + L-glutamate. Functionally, catalyzes the reversible conversion of aspartate and 2-oxoglutarate to glutamate and oxaloacetate. Can also transaminate prephenate in the presence of glutamate. The chain is Probable aspartate/prephenate aminotransferase (aatA) from Rickettsia conorii (strain ATCC VR-613 / Malish 7).